We begin with the raw amino-acid sequence, 339 residues long: UDP-3-O-acylglucosamine N-acyltransferase (339 aa).

The active-site Proton acceptor is the H248.

Belongs to the transferase hexapeptide repeat family. LpxD subfamily. In terms of assembly, homotrimer.

It carries out the reaction a UDP-3-O-[(3R)-3-hydroxyacyl]-alpha-D-glucosamine + a (3R)-hydroxyacyl-[ACP] = a UDP-2-N,3-O-bis[(3R)-3-hydroxyacyl]-alpha-D-glucosamine + holo-[ACP] + H(+). The protein operates within bacterial outer membrane biogenesis; LPS lipid A biosynthesis. Its function is as follows. Catalyzes the N-acylation of UDP-3-O-acylglucosamine using 3-hydroxyacyl-ACP as the acyl donor. Is involved in the biosynthesis of lipid A, a phosphorylated glycolipid that anchors the lipopolysaccharide to the outer membrane of the cell. This Caulobacter vibrioides (strain NA1000 / CB15N) (Caulobacter crescentus) protein is UDP-3-O-acylglucosamine N-acyltransferase.